The following is a 543-amino-acid chain: Zinc metalloproteinase (543 aa).

Positions 1–24 (MHPNYYLSPLAVAIALGIASPVKA) are cleaved as a signal peptide. Positions 25–207 (ADPIPLQKSS…PFVQWDDVKT (183 aa)) are excised as a propeptide. Position 377 (His-377) interacts with Zn(2+). Residue Glu-378 is part of the active site. Positions 381 and 401 each coordinate Zn(2+). The active-site Proton donor is the His-463.

This sequence belongs to the peptidase M4 family. It depends on Zn(2+) as a cofactor.

Its subcellular location is the secreted. Cleaves collagen, gelatin, casein, alpha-1-antitrypsin, and bovine insulin. May play a role in the pathogenesis of legionnaires disease. This chain is Zinc metalloproteinase, found in Legionella pneumophila.